The sequence spans 147 residues: Hemoglobin subunit rho (147 aa).

The region spanning 3 to 147 (HWSAEEKQLI…VAHALAYKYH (145 aa)) is the Globin domain. Residues H64 and H93 each coordinate heme b.

This sequence belongs to the globin family.

Functionally, the rho chain is the major early embryonic beta-type hemoglobin chain. The polypeptide is Hemoglobin subunit rho (Gallus gallus (Chicken)).